A 619-amino-acid polypeptide reads, in one-letter code: Zinc finger CCCH domain-containing protein 67 (619 aa).

2 ANK repeats span residues 52–81 (EPLT…LVDP) and 88–120 (SLST…DPAL). 2 C3H1-type zinc fingers span residues 213–241 (HYSC…HGVF) and 249–273 (QYRT…HTPD). The interval 308–341 (SPGSSSFTPPLSPSAGGGGGGGGGSGGGGAWPQQ) is disordered. Over residues 322–337 (AGGGGGGGGGSGGGGA) the composition is skewed to gly residues.

The polypeptide is Zinc finger CCCH domain-containing protein 67 (Oryza sativa subsp. japonica (Rice)).